Reading from the N-terminus, the 882-residue chain is DNA mismatch repair protein MutS (882 aa).

Position 656–663 (656–663 (GPNASGKS)) interacts with ATP.

The protein belongs to the DNA mismatch repair MutS family.

Functionally, this protein is involved in the repair of mismatches in DNA. It is possible that it carries out the mismatch recognition step. This protein has a weak ATPase activity. The protein is DNA mismatch repair protein MutS of Synechococcus sp. (strain ATCC 27144 / PCC 6301 / SAUG 1402/1) (Anacystis nidulans).